Here is a 963-residue protein sequence, read N- to C-terminus: Integrator complex subunit 4 (963 aa).

K26 carries the post-translational modification N6-acetyllysine. 8 HEAT repeats span residues 66 to 105, 145 to 183, 190 to 228, 229 to 263, 277 to 313, 369 to 405, 406 to 444, and 446 to 484; these read AESV…TAGF, QAIQ…LEKS, GLAA…RGLK, LHQT…SQLY, IRLV…EQVS, NLIE…AQSS, PSFA…NITL, and EDQL…GIHL. A Glycyl lysine isopeptide (Lys-Gly) (interchain with G-Cter in SUMO1); alternate cross-link involves residue K791. K791 participates in a covalent cross-link: Glycyl lysine isopeptide (Lys-Gly) (interchain with G-Cter in SUMO2); alternate.

Belongs to the Integrator subunit 4 family. As to quaternary structure, component of the Integrator complex, composed of core subunits INTS1, INTS2, INTS3, INTS4, INTS5, INTS6, INTS7, INTS8, INTS9/RC74, INTS10, INTS11/CPSF3L, INTS12, INTS13, INTS14 and INTS15. The core complex associates with protein phosphatase 2A subunits PPP2CA and PPP2R1A, to form the Integrator-PP2A (INTAC) complex. INTS4 is part of the RNA endonuclease subcomplex, composed of INTS4, INTS9, INTS11 and inositol hexakisphosphate (InsP6). Interacts with BRAT1; interaction is required for the assembly of the RNA endonuclease subcomplex.

Its subcellular location is the nucleus. It localises to the cytoplasm. In terms of biological role, component of the integrator complex, a multiprotein complex that terminates RNA polymerase II (Pol II) transcription in the promoter-proximal region of genes. The integrator complex provides a quality checkpoint during transcription elongation by driving premature transcription termination of transcripts that are unfavorably configured for transcriptional elongation: the complex terminates transcription by (1) catalyzing dephosphorylation of the C-terminal domain (CTD) of Pol II subunit POLR2A/RPB1 and SUPT5H/SPT5, (2) degrading the exiting nascent RNA transcript via endonuclease activity and (3) promoting the release of Pol II from bound DNA. The integrator complex is also involved in terminating the synthesis of non-coding Pol II transcripts, such as enhancer RNAs (eRNAs), small nuclear RNAs (snRNAs), telomerase RNAs and long non-coding RNAs (lncRNAs). Within the integrator complex, INTS4 acts as an scaffold that links INTS9 and INTS11. Mediates recruitment of cytoplasmic dynein to the nuclear envelope, probably as component of the integrator complex. This Homo sapiens (Human) protein is Integrator complex subunit 4.